The primary structure comprises 190 residues: Putative manganese efflux pump MntP (190 aa).

The next 6 membrane-spanning stretches (helical) occupy residues 3–23 (FLQI…CSVV), 37–57 (LVLA…GWFI), 72–88 (HWIA…KMIW), 111–131 (IILG…LAFV), 138–158 (VALS…WIGH), and 164–184 (FGKW…ANIV).

This sequence belongs to the MntP (TC 9.B.29) family.

It localises to the cell membrane. Functionally, probably functions as a manganese efflux pump. The protein is Putative manganese efflux pump MntP of Corynebacterium glutamicum (strain ATCC 13032 / DSM 20300 / JCM 1318 / BCRC 11384 / CCUG 27702 / LMG 3730 / NBRC 12168 / NCIMB 10025 / NRRL B-2784 / 534).